The chain runs to 210 residues: Cytidylate kinase (210 aa).

9-17 (GPAAAGKGT) serves as a coordination point for ATP.

Belongs to the cytidylate kinase family. Type 1 subfamily.

Its subcellular location is the cytoplasm. The catalysed reaction is CMP + ATP = CDP + ADP. The enzyme catalyses dCMP + ATP = dCDP + ADP. In Agrobacterium fabrum (strain C58 / ATCC 33970) (Agrobacterium tumefaciens (strain C58)), this protein is Cytidylate kinase.